A 337-amino-acid polypeptide reads, in one-letter code: Probable deoxyhypusine synthase (337 aa).

The Nucleophile role is filled by Lys-308.

The protein belongs to the deoxyhypusine synthase family. NAD(+) serves as cofactor.

It catalyses the reaction [eIF5A protein]-L-lysine + spermidine = [eIF5A protein]-deoxyhypusine + propane-1,3-diamine. It functions in the pathway protein modification; eIF5A hypusination. Its function is as follows. Catalyzes the NAD-dependent oxidative cleavage of spermidine and the subsequent transfer of the butylamine moiety of spermidine to the epsilon-amino group of a specific lysine residue of the eIF-5A precursor protein to form the intermediate deoxyhypusine residue. This chain is Probable deoxyhypusine synthase, found in Thermococcus kodakarensis (strain ATCC BAA-918 / JCM 12380 / KOD1) (Pyrococcus kodakaraensis (strain KOD1)).